We begin with the raw amino-acid sequence, 155 residues long: Small ribosomal subunit protein uS17 (155 aa).

Belongs to the universal ribosomal protein uS17 family. As to quaternary structure, component of the small ribosomal subunit. Mature ribosomes consist of a small (40S) and a large (60S) subunit. The 40S subunit contains about 32 different proteins and 1 molecule of RNA (18S). The 60S subunit contains 45 different proteins and 3 molecules of RNA (25S, 5.8S and 5S).

The protein localises to the cytoplasm. In terms of biological role, component of the ribosome, a large ribonucleoprotein complex responsible for the synthesis of proteins in the cell. The small ribosomal subunit (SSU) binds messenger RNAs (mRNAs) and translates the encoded message by selecting cognate aminoacyl-transfer RNA (tRNA) molecules. The large subunit (LSU) contains the ribosomal catalytic site termed the peptidyl transferase center (PTC), which catalyzes the formation of peptide bonds, thereby polymerizing the amino acids delivered by tRNAs into a polypeptide chain. The nascent polypeptides leave the ribosome through a tunnel in the LSU and interact with protein factors that function in enzymatic processing, targeting, and the membrane insertion of nascent chains at the exit of the ribosomal tunnel. This is Small ribosomal subunit protein uS17 from Candida albicans (strain SC5314 / ATCC MYA-2876) (Yeast).